The following is a 121-amino-acid chain: Small ribosomal subunit protein uS13 (121 aa).

The interval 89–121 (RRHRMSLPVRGQRTRTNARTRRGSRKTVAGRKK) is disordered. Basic residues predominate over residues 100–121 (QRTRTNARTRRGSRKTVAGRKK).

The protein belongs to the universal ribosomal protein uS13 family. As to quaternary structure, part of the 30S ribosomal subunit. Forms a loose heterodimer with protein S19. Forms two bridges to the 50S subunit in the 70S ribosome.

Located at the top of the head of the 30S subunit, it contacts several helices of the 16S rRNA. In the 70S ribosome it contacts the 23S rRNA (bridge B1a) and protein L5 of the 50S subunit (bridge B1b), connecting the 2 subunits; these bridges are implicated in subunit movement. Contacts the tRNAs in the A and P-sites. This is Small ribosomal subunit protein uS13 from Prochlorococcus marinus subsp. pastoris (strain CCMP1986 / NIES-2087 / MED4).